A 680-amino-acid polypeptide reads, in one-letter code: DNA ligase 1 (680 aa).

Residues 35 to 39 (DAEYD), 84 to 85 (SL), and aspartate 115 each bind NAD(+). The N6-AMP-lysine intermediate role is filled by lysine 117. NAD(+)-binding residues include arginine 138, glutamate 175, lysine 295, and lysine 319. Zn(2+)-binding residues include cysteine 413, cysteine 416, cysteine 431, and cysteine 436. Residues 599–680 (REGSQLQGLK…FANLLKGLDR (82 aa)) enclose the BRCT domain.

It belongs to the NAD-dependent DNA ligase family. LigA subfamily. The cofactor is Mg(2+). It depends on Mn(2+) as a cofactor.

It catalyses the reaction NAD(+) + (deoxyribonucleotide)n-3'-hydroxyl + 5'-phospho-(deoxyribonucleotide)m = (deoxyribonucleotide)n+m + AMP + beta-nicotinamide D-nucleotide.. In terms of biological role, DNA ligase that catalyzes the formation of phosphodiester linkages between 5'-phosphoryl and 3'-hydroxyl groups in double-stranded DNA using NAD as a coenzyme and as the energy source for the reaction. It is essential for DNA replication and repair of damaged DNA. The chain is DNA ligase 1 from Nitratidesulfovibrio vulgaris (strain DP4) (Desulfovibrio vulgaris).